Consider the following 197-residue polypeptide: Transcription factor FapR (197 aa).

It belongs to the FapR family.

Functionally, transcriptional factor involved in regulation of membrane lipid biosynthesis by repressing genes involved in fatty acid and phospholipid metabolism. The protein is Transcription factor FapR of Bacillus cytotoxicus (strain DSM 22905 / CIP 110041 / 391-98 / NVH 391-98).